The sequence spans 102 residues: Protamine-2 (102 aa).

Phosphoserine occurs at positions 8, 10, and 37. 2 disordered regions span residues 15–41 (EVYG…PEQV) and 66–102 (IHRQ…CRRH).

It belongs to the protamine P2 family. In terms of assembly, interacts with TDRP. Proteolytic processing into mature chains is required for histone eviction during spermatogenesis. Transition proteins (TNP1 and TNP2) are required for processing. In terms of tissue distribution, testis.

It localises to the nucleus. The protein localises to the chromosome. In terms of biological role, protamines substitute for histones in the chromatin of sperm during the haploid phase of spermatogenesis. They compact sperm DNA into a highly condensed, stable and inactive complex. The polypeptide is Protamine-2 (PRM2) (Pongo pygmaeus (Bornean orangutan)).